The primary structure comprises 414 residues: Protein MAK11 (414 aa).

S2 bears the N-acetylserine mark. WD repeat units follow at residues A50–D78, S90–R135, G147–N177, L189–E221, L238–P267, and G298–D330. A phosphoserine mark is found at S376 and S380. A Phosphothreonine modification is found at T382.

Associates with 60S pre-ribosomal particles.

It localises to the nucleus. It is found in the nucleolus. The protein localises to the nucleus membrane. Functionally, essential for cell growth. Plays a role in assembly of 60S pre-ribosomal particles in the nucleolus. Also required for replication of the M1 double-stranded RNA of the L-A virus. This latter function may reflect an enhanced requirement for free 60S ribosomal particles for the translation of viral mRNAs which lack poly-A tails. The chain is Protein MAK11 (MAK11) from Saccharomyces cerevisiae (strain ATCC 204508 / S288c) (Baker's yeast).